The following is a 583-amino-acid chain: Laccase-21 (583 aa).

The first 29 residues, 1–29, serve as a signal peptide directing secretion; that stretch reads MGIAKIPAVLWLLACAVLTFAVAISPAHG. 2 Plastocyanin-like domains span residues 39–155 and 165–323; these read FITE…PKHG and KEIP…YYTG. Residue Asn85 is glycosylated (N-linked (GlcNAc...) asparagine). His89, His91, His134, and His136 together coordinate Cu cation. N-linked (GlcNAc...) asparagine glycosylation is found at Asn282, Asn311, Asn384, Asn387, Asn399, Asn409, and Asn446. The Plastocyanin-like 3 domain maps to 436 to 567; the sequence is FPNNPAPVFV…NTVFIVKDGK (132 aa). Residues His484, His487, His489, His546, Cys547, His548, His552, and Met557 each coordinate Cu cation.

The protein belongs to the multicopper oxidase family. It depends on Cu cation as a cofactor.

Its subcellular location is the secreted. It is found in the extracellular space. It localises to the apoplast. The catalysed reaction is 4 hydroquinone + O2 = 4 benzosemiquinone + 2 H2O. Its function is as follows. Lignin degradation and detoxification of lignin-derived products. The polypeptide is Laccase-21 (LAC21) (Oryza sativa subsp. japonica (Rice)).